A 302-amino-acid polypeptide reads, in one-letter code: Acetyl-coenzyme A carboxylase carboxyl transferase subunit beta (302 aa).

The region spanning 25–294 (VWTKCDSCGQ…PQEDIVTEAA (270 aa)) is the CoA carboxyltransferase N-terminal domain. The Zn(2+) site is built by cysteine 29, cysteine 32, cysteine 48, and cysteine 51. The C4-type zinc-finger motif lies at 29–51 (CDSCGQVLYRAELERNLEVCPKC).

Belongs to the AccD/PCCB family. In terms of assembly, acetyl-CoA carboxylase is a heterohexamer composed of biotin carboxyl carrier protein (AccB), biotin carboxylase (AccC) and two subunits each of ACCase subunit alpha (AccA) and ACCase subunit beta (AccD). The cofactor is Zn(2+).

The protein localises to the cytoplasm. It carries out the reaction N(6)-carboxybiotinyl-L-lysyl-[protein] + acetyl-CoA = N(6)-biotinyl-L-lysyl-[protein] + malonyl-CoA. It functions in the pathway lipid metabolism; malonyl-CoA biosynthesis; malonyl-CoA from acetyl-CoA: step 1/1. Functionally, component of the acetyl coenzyme A carboxylase (ACC) complex. Biotin carboxylase (BC) catalyzes the carboxylation of biotin on its carrier protein (BCCP) and then the CO(2) group is transferred by the transcarboxylase to acetyl-CoA to form malonyl-CoA. The sequence is that of Acetyl-coenzyme A carboxylase carboxyl transferase subunit beta from Erwinia tasmaniensis (strain DSM 17950 / CFBP 7177 / CIP 109463 / NCPPB 4357 / Et1/99).